The following is a 335-amino-acid chain: Phosphate acyltransferase (335 aa).

This sequence belongs to the PlsX family. In terms of assembly, homodimer. Probably interacts with PlsY.

The protein resides in the cytoplasm. The enzyme catalyses a fatty acyl-[ACP] + phosphate = an acyl phosphate + holo-[ACP]. It participates in lipid metabolism; phospholipid metabolism. Its function is as follows. Catalyzes the reversible formation of acyl-phosphate (acyl-PO(4)) from acyl-[acyl-carrier-protein] (acyl-ACP). This enzyme utilizes acyl-ACP as fatty acyl donor, but not acyl-CoA. This Streptococcus suis (strain 98HAH33) protein is Phosphate acyltransferase.